A 77-amino-acid chain; its full sequence is Dermatoxin-DA1 (77 aa).

The signal sequence occupies residues 1-22 (MAFLKKSLFLVLFLGLVPLFLC). A propeptide spanning residues 23-42 (ENEKREGENEKEENDDQSEE) is cleaved from the precursor. K76 is subject to Lysine amide.

It belongs to the frog skin active peptide (FSAP) family. Dermatoxin subfamily. In terms of tissue distribution, expressed by the skin glands.

The protein resides in the secreted. In terms of biological role, possesses a potent antimicrobial activity against Gram-positive and Gram-negative bacteria. Probably acts by disturbing membrane functions with its amphipathic structure. This is Dermatoxin-DA1 from Agalychnis dacnicolor (Giant Mexican leaf frog).